Consider the following 89-residue polypeptide: Large ribosomal subunit protein bL27 (89 aa).

It belongs to the bacterial ribosomal protein bL27 family.

The chain is Large ribosomal subunit protein bL27 from Bacteroides thetaiotaomicron (strain ATCC 29148 / DSM 2079 / JCM 5827 / CCUG 10774 / NCTC 10582 / VPI-5482 / E50).